A 501-amino-acid chain; its full sequence is 4,4'-diapophytoene desaturase (4,4'-diaponeurosporene-forming) (501 aa).

Val-5–Ala-17 serves as a coordination point for FAD.

Belongs to the carotenoid/retinoid oxidoreductase family. CrtN subfamily.

It catalyses the reaction 15-cis-4,4'-diapophytoene + 3 FAD + 3 H(+) = all-trans-4,4'-diaponeurosporene + 3 FADH2. Its pathway is carotenoid biosynthesis; staphyloxanthin biosynthesis; staphyloxanthin from farnesyl diphosphate: step 2/5. In terms of biological role, involved in the biosynthesis of the yellow-orange carotenoid staphyloxanthin, which plays a role in the virulence via its protective function against oxidative stress. Catalyzes three successive dehydrogenation reactions that lead to the introduction of three double bonds into 4,4'-diapophytoene (dehydrosqualene), with 4,4'-diapophytofluene and 4,4'-diapo-zeta-carotene as intermediates, and 4,4'-diaponeurosporene (the major deep-yellow pigment in staphylococci strains) as the end product. The chain is 4,4'-diapophytoene desaturase (4,4'-diaponeurosporene-forming) from Staphylococcus haemolyticus (strain JCSC1435).